The sequence spans 319 residues: tRNA (guanine-N(7)-)-methyltransferase (319 aa).

The disordered stretch occupies residues 1–44 (MSESPETPEPSPAQSPEAAPEQPQAARPVTPGSQASFGTYGGRP). Positions 14 to 26 (QSPEAAPEQPQAA) are enriched in low complexity. 4 residues coordinate S-adenosyl-L-methionine: Glu103, Glu128, Asn155, and Asp178. Asp178 is a catalytic residue. Residues Lys182 and Asp214 each coordinate substrate. The tract at residues 262 to 288 (APVKEGRAPVSTEHTGPNEGVDETGGW) is disordered. Residue 298–301 (TSFE) coordinates substrate.

Belongs to the class I-like SAM-binding methyltransferase superfamily. TrmB family.

It catalyses the reaction guanosine(46) in tRNA + S-adenosyl-L-methionine = N(7)-methylguanosine(46) in tRNA + S-adenosyl-L-homocysteine. It participates in tRNA modification; N(7)-methylguanine-tRNA biosynthesis. Catalyzes the formation of N(7)-methylguanine at position 46 (m7G46) in tRNA. This chain is tRNA (guanine-N(7)-)-methyltransferase, found in Arthrobacter sp. (strain FB24).